The primary structure comprises 337 residues: Dolichyl-phosphate beta-glucosyltransferase ALG5C (337 aa).

The Lumenal portion of the chain corresponds to 1–6 (MNDLPP). Residues 7-27 (IANLISNILFVLLIITFLYAL) traverse the membrane as a helical segment. The Cytoplasmic portion of the chain corresponds to 28-337 (CSRFVSDKTL…ADTPISDFEV (310 aa)).

Belongs to the glycosyltransferase 2 family.

It localises to the endoplasmic reticulum membrane. It catalyses the reaction a di-trans,poly-cis-dolichyl phosphate + UDP-alpha-D-glucose = a di-trans,poly-cis-dolichyl beta-D-glucosyl phosphate + UDP. It functions in the pathway protein modification; protein glycosylation. Dolichyl-phosphate beta-glucosyltransferase involved in the glycosylation of glycoproteins through the synthesis of dolichyl beta-D-glucosyl phosphate which serves as a sugar donor for transfer of three glucose residues to the Man-9-GlcNAc-2-PP-dolichol precursor to N-glycans. In Trichomonas vaginalis (strain ATCC PRA-98 / G3), this protein is Dolichyl-phosphate beta-glucosyltransferase ALG5C.